The following is a 453-amino-acid chain: tRNA modification GTPase MnmE (453 aa).

Residues arginine 22, glutamate 79, and lysine 119 each coordinate (6S)-5-formyl-5,6,7,8-tetrahydrofolate. The TrmE-type G domain maps to 215-376; sequence GMKVVIAGRP…LKQHLKSLMG (162 aa). Position 225 (asparagine 225) interacts with K(+). GTP contacts are provided by residues 225 to 230, 244 to 250, 269 to 272, and 334 to 337; these read NAGKSS, TEIAGTT, DTAG, and NKAD. Serine 229 serves as a coordination point for Mg(2+). Residues threonine 244, isoleucine 246, and threonine 249 each contribute to the K(+) site. Threonine 250 provides a ligand contact to Mg(2+). (6S)-5-formyl-5,6,7,8-tetrahydrofolate is bound at residue lysine 453.

Belongs to the TRAFAC class TrmE-Era-EngA-EngB-Septin-like GTPase superfamily. TrmE GTPase family. As to quaternary structure, homodimer. Heterotetramer of two MnmE and two MnmG subunits. K(+) is required as a cofactor.

The protein resides in the cytoplasm. Exhibits a very high intrinsic GTPase hydrolysis rate. Involved in the addition of a carboxymethylaminomethyl (cmnm) group at the wobble position (U34) of certain tRNAs, forming tRNA-cmnm(5)s(2)U34. The chain is tRNA modification GTPase MnmE from Shewanella baltica (strain OS195).